Here is a 119-residue protein sequence, read N- to C-terminus: Large ribosomal subunit protein bL20c (119 aa).

The protein belongs to the bacterial ribosomal protein bL20 family.

It localises to the plastid. The protein resides in the chloroplast. In terms of biological role, binds directly to 23S ribosomal RNA and is necessary for the in vitro assembly process of the 50S ribosomal subunit. It is not involved in the protein synthesizing functions of that subunit. The sequence is that of Large ribosomal subunit protein bL20c from Triticum aestivum (Wheat).